We begin with the raw amino-acid sequence, 423 residues long: Growth hormone-releasing hormone receptor (423 aa).

The N-terminal stretch at 1–22 is a signal peptide; the sequence is MDSGVWAACIFCLLSSLPVALG. Over 23-130 the chain is Extracellular; sequence HVHPECDFIT…DEKSYFSTVR (108 aa). Disulfide bonds link Cys-41/Cys-64, Cys-55/Cys-96, and Cys-78/Cys-112. The N-linked (GlcNAc...) asparagine glycan is linked to Asn-50. Residues 131-151 traverse the membrane as a helical segment; the sequence is IVYTTGHSVSAVALFVAIAIL. The Cytoplasmic segment spans residues 152 to 167; sequence VALRRLHCPRNYIHSQ. Residues 168–188 form a helical membrane-spanning segment; the sequence is LFATFILKAGAVFLKDAALFH. At 189–210 the chain is on the extracellular side; sequence SENTDHCSFSTVLCKVSVATSH. Residues 211 to 231 traverse the membrane as a helical segment; that stretch reads FATMTNFSWLLAEAVYLTCLL. Residues 232–240 are Cytoplasmic-facing; that stretch reads ASTSPSTRR. The helical transmembrane segment at 241 to 261 threads the bilayer; that stretch reads AFWWLVLAGWGLPLLFTGTWV. The Extracellular segment spans residues 262–283; sequence GCKLAFEDVACWDLDDSSPYWW. A helical transmembrane segment spans residues 284-304; it reads IIKGPIVLSVGVNFGLFLNII. The Cytoplasmic portion of the chain corresponds to 305 to 331; sequence RILLRKLEPAQGSLHTQPQYWRLSKST. Residues 332 to 352 form a helical membrane-spanning segment; the sequence is LLLIPLFGIHYVIFNFLPDSA. The Extracellular portion of the chain corresponds to 353–357; sequence GLGIR. A helical membrane pass occupies residues 358–378; that stretch reads LPLELGLGSFQGFIVAILYCF. Over 379–423 the chain is Cytoplasmic; it reads LNQEVRTEISRRWHGHDPELLPAWRTHAKWAKPSRSRAKVLTTVC.

The protein belongs to the G-protein coupled receptor 2 family. Pituitary gland. Also detected in the lymphocytes and thymocytes.

Its subcellular location is the cell membrane. Its function is as follows. Receptor for GRF, coupled to G proteins which activate adenylyl cyclase. Stimulates somatotroph cell growth, growth hormone gene transcription and growth hormone secretion. The sequence is that of Growth hormone-releasing hormone receptor (GHRHR) from Sus scrofa (Pig).